We begin with the raw amino-acid sequence, 206 residues long: Flavin reductase (NADPH) (206 aa).

The NADP(+) site is built by Gly10, Thr12, Gly13, Thr15, Arg35, Ser38, and Arg39. Ser42 bears the Phosphoserine mark. The NADP(+) site is built by Asp54, Val55, Leu75, and Gly76. Position 82 is a phosphoserine (Ser82). NADP(+) contacts are provided by Met87, Cys109, His132, His153, and Ile154. Cys109 serves as the catalytic S-nitroso-cysteine intermediate; for S-nitroso-CoA-dependent nitrosyltransferase activity. Cys188 acts as the S-nitroso-cysteine intermediate; for S-nitroso-CoA-dependent nitrosyltransferase activity in catalysis.

Belongs to the BLVRB family. In terms of assembly, monomer.

It localises to the cytoplasm. It catalyses the reaction reduced riboflavin + NADP(+) = riboflavin + NADPH + 2 H(+). The catalysed reaction is bilirubin IXbeta + NADP(+) = biliverdin IXbeta + NADPH + H(+). The enzyme catalyses FMNH2 + NAD(+) = FMN + NADH + 2 H(+). It carries out the reaction FMNH2 + NADP(+) = FMN + NADPH + 2 H(+). It catalyses the reaction S-nitroso-CoA + L-cysteinyl-[protein] = S-nitroso-L-cysteinyl-[protein] + CoA. The catalysed reaction is L-cysteinyl-[SCAN] + S-nitroso-CoA = S-nitroso-L-cysteinyl-[SCAN] + CoA. The enzyme catalyses S-nitroso-L-cysteinyl-[SCAN] + L-cysteinyl-[protein] = L-cysteinyl-[SCAN] + S-nitroso-L-cysteinyl-[protein]. Functionally, enzyme that can both act as a NAD(P)H-dependent reductase and a S-nitroso-CoA-dependent nitrosyltransferase. Promotes fetal heme degradation during development. Also expressed in adult tissues, where it acts as a regulator of hematopoiesis, intermediary metabolism (glutaminolysis, glycolysis, TCA cycle and pentose phosphate pathway) and insulin signaling. Has a broad specificity oxidoreductase activity by catalyzing the NAD(P)H-dependent reduction of a variety of flavins, such as riboflavin, FAD or FMN, biliverdins, methemoglobin and PQQ (pyrroloquinoline quinone). Contributes to fetal heme catabolism by catalyzing reduction of biliverdin IXbeta into bilirubin IXbeta in the liver. Biliverdin IXbeta, which constitutes the major heme catabolite in the fetus is not present in adult. Does not reduce bilirubin IXalpha. Can also reduce the complexed Fe(3+) iron to Fe(2+) in the presence of FMN and NADPH. Acts as a protein nitrosyltransferase by catalyzing nitrosylation of cysteine residues of target proteins, such as HMOX2, INSR and IRS1. S-nitroso-CoA-dependent nitrosyltransferase activity is mediated via a 'ping-pong' mechanism: BLVRB first associates with both S-nitroso-CoA and protein substrate, nitric oxide group is then transferred from S-nitroso-CoA to Cys-109 and Cys-188 residues of BLVRB and from S-nitroso-BLVRB to the protein substrate. Inhibits insulin signaling by mediating nitrosylation of INSR and IRS1, leading to their inhibition. This Mus musculus (Mouse) protein is Flavin reductase (NADPH) (Blvrb).